Reading from the N-terminus, the 410-residue chain is Arginine biosynthesis bifunctional protein ArgJ (410 aa).

Substrate contacts are provided by Thr158, Lys184, Thr195, Glu282, Asn405, and Thr410. Catalysis depends on Thr195, which acts as the Nucleophile.

Belongs to the ArgJ family. Heterotetramer of two alpha and two beta chains.

The protein localises to the cytoplasm. The enzyme catalyses N(2)-acetyl-L-ornithine + L-glutamate = N-acetyl-L-glutamate + L-ornithine. It carries out the reaction L-glutamate + acetyl-CoA = N-acetyl-L-glutamate + CoA + H(+). The protein operates within amino-acid biosynthesis; L-arginine biosynthesis; L-ornithine and N-acetyl-L-glutamate from L-glutamate and N(2)-acetyl-L-ornithine (cyclic): step 1/1. Its pathway is amino-acid biosynthesis; L-arginine biosynthesis; N(2)-acetyl-L-ornithine from L-glutamate: step 1/4. Functionally, catalyzes two activities which are involved in the cyclic version of arginine biosynthesis: the synthesis of N-acetylglutamate from glutamate and acetyl-CoA as the acetyl donor, and of ornithine by transacetylation between N(2)-acetylornithine and glutamate. In Rhodopirellula baltica (strain DSM 10527 / NCIMB 13988 / SH1), this protein is Arginine biosynthesis bifunctional protein ArgJ.